An 863-amino-acid polypeptide reads, in one-letter code: Ubiquitin carboxyl-terminal hydrolase 13 (863 aa).

Ser-114 is subject to Phosphoserine; by AURKB. Thr-122 carries the phosphothreonine modification. The UBP-type; degenerate zinc-finger motif lies at 187-295 (PVSKYANNLT…KHLAHFGIDM (109 aa)). Residues Cys-211, Cys-214, Cys-231, and His-244 each coordinate Zn(2+). Lys-311 participates in a covalent cross-link: Glycyl lysine isopeptide (Lys-Gly) (interchain with G-Cter in SUMO2). The USP domain occupies 336-861 (TGLKNLGNSC…LGYMYFYRRI (526 aa)). Cys-345 acts as the Nucleophile in catalysis. A Glycyl lysine isopeptide (Lys-Gly) (interchain with G-Cter in SUMO2) cross-link involves residue Lys-405. UBA domains lie at 652 to 693 (DIDE…IIVH) and 727 to 767 (QPPE…IFSH). Residue His-823 is the Proton acceptor of the active site.

Belongs to the peptidase C19 family. Interacts with UFD1. Interacts (via UBA domains) with SIAH2 (when ubiquitinated). Interacts with BAG6; the interaction is direct and may mediate UBL4A deubiquitination. Interacts (via UBA 2 domain) with AMFR; the interaction is direct. Interacts with UBL4A; may be indirect via BAG6. Interacts with NEDD4. Phosphorylated by AURKB at Ser-114; leading to stabilization of cell cycle proteins such as SKP2 and AURKB, but not MCL1. As to expression, highly expressed in ovary and testes.

The protein resides in the cytoplasm. The enzyme catalyses Thiol-dependent hydrolysis of ester, thioester, amide, peptide and isopeptide bonds formed by the C-terminal Gly of ubiquitin (a 76-residue protein attached to proteins as an intracellular targeting signal).. Specifically inhibited by spautin-1 (specific and potent autophagy inhibitor-1), a derivative of MBCQ that binds to USP13 and inhibits deubiquitinase activity. Regulated by PIK3C3/VPS34-containing complexes. The weak deubiquitinase activity in vitro suggests the existence of some mechanism that activates the enzyme. Deubiquitinase that mediates deubiquitination of target proteins such as BECN1, MITF, SKP2 and USP10 and is involved in various processes such as autophagy, endoplasmic reticulum-associated degradation (ERAD), cell cycle progression or DNA damage response. Component of a regulatory loop that controls autophagy and p53/TP53 levels: mediates deubiquitination of BECN1, a key regulator of autophagy, leading to stabilize the PIK3C3/VPS34-containing complexes. Alternatively, forms with NEDD4 a deubiquitination complex, which subsequently stabilizes VPS34 to promote autophagy. Also deubiquitinates USP10, an essential regulator of p53/TP53 stability. In turn, PIK3C3/VPS34-containing complexes regulate USP13 stability, suggesting the existence of a regulatory system by which PIK3C3/VPS34-containing complexes regulate p53/TP53 protein levels via USP10 and USP13. Recruited by nuclear UFD1 and mediates deubiquitination of SKP2, thereby regulating endoplasmic reticulum-associated degradation (ERAD). Also regulates ERAD through the deubiquitination of UBL4A a component of the BAG6/BAT3 complex. Mediates stabilization of SIAH2 independently of deubiquitinase activity: binds ubiquitinated SIAH2 and acts by impairing SIAH2 autoubiquitination. Regulates the cell cycle progression by stabilizing cell cycle proteins such as SKP2 and AURKB. In addition, plays an important role in maintaining genomic stability and in DNA replication checkpoint activation via regulation of RAP80 and TOPBP1. Deubiquitinates the multifunctional protein HMGB1 and subsequently drives its nucleocytoplasmic localization and its secretion. Positively regulates type I and type II interferon signalings by deubiquitinating STAT1 but negatively regulates antiviral response by deubiquitinating STING1. The sequence is that of Ubiquitin carboxyl-terminal hydrolase 13 (USP13) from Homo sapiens (Human).